Consider the following 297-residue polypeptide: Urease accessory protein UreD (297 aa).

This sequence belongs to the UreD family. In terms of assembly, ureD, UreF and UreG form a complex that acts as a GTP-hydrolysis-dependent molecular chaperone, activating the urease apoprotein by helping to assemble the nickel containing metallocenter of UreC. The UreE protein probably delivers the nickel.

Its subcellular location is the cytoplasm. Its function is as follows. Required for maturation of urease via the functional incorporation of the urease nickel metallocenter. The chain is Urease accessory protein UreD from Anaeromyxobacter sp. (strain Fw109-5).